Reading from the N-terminus, the 364-residue chain is Nuclear hormone receptor family member nhr-53 (364 aa).

Residues 20 to 95 (PSYCLICCEV…VGMQRSSVQQ (76 aa)) constitute a DNA-binding region (nuclear receptor). 2 consecutive NR C4-type zinc fingers follow at residues 23–43 (CLICCEVADGHHFGAAACRAC) and 59–83 (CPKNGQCFILSNVRNMCRACRYEKC). Positions 110 to 363 (REEPVLDTMR…KNLYDMFSPT (254 aa)) constitute an NR LBD domain.

It belongs to the nuclear hormone receptor family.

The protein localises to the nucleus. Its function is as follows. Orphan nuclear receptor. The protein is Nuclear hormone receptor family member nhr-53 (nhr-53) of Caenorhabditis elegans.